The following is a 348-amino-acid chain: MSAISNNPDKEKALNLVLNQIERNFGKGAIMRLGDAAQMKVATIPSGALTLDQAMGGGFPRGRIVEIYGPESSGKTTVALHAIAEVQKAGGVAAFIDAEHALDPTYSAALGVDIENLLVAQPDNGESALEIADQLVRSAAVDLIVIDSVAALVPRAEIEGEMGDVQVGLQARLMSKALRKIAGNMGRSGCTVIFLNQLRQKIGISYGNPEVTTGGTALKFYASVRLDIRRIQTLKKGSEGEFGIRAKVKVAKNKVAPPFRIAEFDIIFGKGISRVGCMLDLAEQTGVITRKGAWYSYEGDNIAQGRDNAVKYLEENPDVAAIVTQKVRENLDMSSMGFGDEHHTTEEE.

69–76 is an ATP binding site; it reads GPESSGKT.

The protein belongs to the RecA family.

The protein resides in the cytoplasm. Can catalyze the hydrolysis of ATP in the presence of single-stranded DNA, the ATP-dependent uptake of single-stranded DNA by duplex DNA, and the ATP-dependent hybridization of homologous single-stranded DNAs. It interacts with LexA causing its activation and leading to its autocatalytic cleavage. This Picosynechococcus sp. (strain ATCC 27264 / PCC 7002 / PR-6) (Agmenellum quadruplicatum) protein is Protein RecA.